The following is a 72-amino-acid chain: MAKQSAIEKDGVIVEALSNAMFRVELENGHEITAHISGKMRMHYIKILPGDKVRVEMSPYDLSKGRIAFRYK.

Residues 1–72 (MAKQSAIEKD…SKGRIAFRYK (72 aa)) form the S1-like domain.

This sequence belongs to the IF-1 family. In terms of assembly, component of the 30S ribosomal translation pre-initiation complex which assembles on the 30S ribosome in the order IF-2 and IF-3, IF-1 and N-formylmethionyl-tRNA(fMet); mRNA recruitment can occur at any time during PIC assembly.

It localises to the cytoplasm. Its function is as follows. One of the essential components for the initiation of protein synthesis. Stabilizes the binding of IF-2 and IF-3 on the 30S subunit to which N-formylmethionyl-tRNA(fMet) subsequently binds. Helps modulate mRNA selection, yielding the 30S pre-initiation complex (PIC). Upon addition of the 50S ribosomal subunit IF-1, IF-2 and IF-3 are released leaving the mature 70S translation initiation complex. The polypeptide is Translation initiation factor IF-1 (Parabacteroides distasonis (strain ATCC 8503 / DSM 20701 / CIP 104284 / JCM 5825 / NCTC 11152)).